The primary structure comprises 273 residues: Orotidine 5'-phosphate decarboxylase (273 aa).

Lysine 97 acts as the Proton donor in catalysis.

It belongs to the OMP decarboxylase family. Type 2 subfamily.

It carries out the reaction orotidine 5'-phosphate + H(+) = UMP + CO2. Its pathway is pyrimidine metabolism; UMP biosynthesis via de novo pathway; UMP from orotate: step 2/2. The sequence is that of Orotidine 5'-phosphate decarboxylase from Cellvibrio japonicus (strain Ueda107) (Pseudomonas fluorescens subsp. cellulosa).